The sequence spans 154 residues: Ascorbate-specific PTS system EIIA component (154 aa).

The PTS EIIA type-2 domain maps to 6 to 150; it reads SLAVNKSIRL…QEVLDLIDRT (145 aa). The Tele-phosphohistidine intermediate role is filled by histidine 68. Position 68 is a phosphohistidine (histidine 68).

The protein localises to the cytoplasm. Its function is as follows. The phosphoenolpyruvate-dependent sugar phosphotransferase system (sugar PTS), a major carbohydrate active transport system, catalyzes the phosphorylation of incoming sugar substrates concomitantly with their translocation across the cell membrane. The enzyme II UlaABC PTS system is involved in ascorbate transport. The chain is Ascorbate-specific PTS system EIIA component (ulaC) from Shigella dysenteriae serotype 1 (strain Sd197).